Here is a 157-residue protein sequence, read N- to C-terminus: Transcriptional regulator MraZ (157 aa).

2 consecutive SpoVT-AbrB domains span residues 7 to 54 (TYEC…PMKE) and 83 to 126 (VRII…DKDL).

This sequence belongs to the MraZ family. As to quaternary structure, forms oligomers.

It localises to the cytoplasm. The protein localises to the nucleoid. The chain is Transcriptional regulator MraZ from Flavobacterium psychrophilum (strain ATCC 49511 / DSM 21280 / CIP 103535 / JIP02/86).